Reading from the N-terminus, the 55-residue chain is ATP synthase protein 8 (55 aa).

A helical transmembrane segment spans residues 7–28; that stretch reads ISWFFNFLLAWFFLFIVVTILL.

The protein belongs to the ATPase protein 8 family. F-type ATPases have 2 components, CF(1) - the catalytic core - and CF(0) - the membrane proton channel.

The protein localises to the mitochondrion membrane. In terms of biological role, mitochondrial membrane ATP synthase (F(1)F(0) ATP synthase or Complex V) produces ATP from ADP in the presence of a proton gradient across the membrane which is generated by electron transport complexes of the respiratory chain. F-type ATPases consist of two structural domains, F(1) - containing the extramembraneous catalytic core and F(0) - containing the membrane proton channel, linked together by a central stalk and a peripheral stalk. During catalysis, ATP synthesis in the catalytic domain of F(1) is coupled via a rotary mechanism of the central stalk subunits to proton translocation. Part of the complex F(0) domain. Minor subunit located with subunit a in the membrane. The polypeptide is ATP synthase protein 8 (MT-ATP8) (Pisaster ochraceus (Ochre sea star)).